A 211-amino-acid chain; its full sequence is Large ribosomal subunit protein uL3 (211 aa).

The interval 122 to 156 (NQKRNNFGRGPMSHGSKNHRAPGSIGAGTTPGRVY) is disordered.

Belongs to the universal ribosomal protein uL3 family. In terms of assembly, part of the 50S ribosomal subunit. Forms a cluster with proteins L14 and L19.

Its function is as follows. One of the primary rRNA binding proteins, it binds directly near the 3'-end of the 23S rRNA, where it nucleates assembly of the 50S subunit. The protein is Large ribosomal subunit protein uL3 of Nostoc sp. (strain PCC 7120 / SAG 25.82 / UTEX 2576).